Consider the following 508-residue polypeptide: Photosystem II CP47 reaction center protein (508 aa).

Helical transmembrane passes span 21–36 (AVHIMHTALVSGWAGS), 101–115 (IVFSGLCFLAAIWHW), 140–156 (GIHLFLAGVACFGFGAF), 203–218 (IAAGTLGILAGLFHLS), 237–252 (VLSSSIAAVFFAAFVV), and 457–472 (TFALLFFFGHIWHGAR).

Belongs to the PsbB/PsbC family. PsbB subfamily. As to quaternary structure, PSII is composed of 1 copy each of membrane proteins PsbA, PsbB, PsbC, PsbD, PsbE, PsbF, PsbH, PsbI, PsbJ, PsbK, PsbL, PsbM, PsbT, PsbX, PsbY, PsbZ, Psb30/Ycf12, at least 3 peripheral proteins of the oxygen-evolving complex and a large number of cofactors. It forms dimeric complexes. The cofactor is Binds multiple chlorophylls. PSII binds additional chlorophylls, carotenoids and specific lipids..

It localises to the plastid. Its subcellular location is the chloroplast thylakoid membrane. One of the components of the core complex of photosystem II (PSII). It binds chlorophyll and helps catalyze the primary light-induced photochemical processes of PSII. PSII is a light-driven water:plastoquinone oxidoreductase, using light energy to abstract electrons from H(2)O, generating O(2) and a proton gradient subsequently used for ATP formation. The polypeptide is Photosystem II CP47 reaction center protein (Lolium perenne (Perennial ryegrass)).